We begin with the raw amino-acid sequence, 196 residues long: uncharacterized protein (196 aa).

A Bro-N domain is found at 58–163 (HKFFDAIKDS…IILPNNYHKN (106 aa)).

This is an uncharacterized protein from Acanthamoeba polyphaga mimivirus (APMV).